The chain runs to 451 residues: Phosphoglucosamine mutase (451 aa).

Residue S102 is the Phosphoserine intermediate of the active site. S102, D242, D244, and D246 together coordinate Mg(2+). A Phosphoserine modification is found at S102.

This sequence belongs to the phosphohexose mutase family. Mg(2+) serves as cofactor. In terms of processing, activated by phosphorylation.

The enzyme catalyses alpha-D-glucosamine 1-phosphate = D-glucosamine 6-phosphate. In terms of biological role, catalyzes the conversion of glucosamine-6-phosphate to glucosamine-1-phosphate. The chain is Phosphoglucosamine mutase from Staphylococcus carnosus (strain TM300).